The chain runs to 521 residues: Maturase K (521 aa).

Belongs to the intron maturase 2 family. MatK subfamily.

It localises to the plastid. It is found in the chloroplast. Its function is as follows. Usually encoded in the trnK tRNA gene intron. Probably assists in splicing its own and other chloroplast group II introns. The sequence is that of Maturase K from Trillium catesbaei (Catesby's trillium).